A 241-amino-acid polypeptide reads, in one-letter code: MLPGCCKNGIVISKIPVMQAGLKEVMRTHFPEYEIISSASAEDLTLLQLRRSGLVIADLAGESEDPRSVCEHYYSLISQYREIHWVFMVSRSWYSQAVELLMCPTATLLSDVEPIENLVKTVRSGNTHAERISAMLTSPAMTETHDFSYRSVILTLSERKVLRLLGKGWGINQIASLLKKSNKTISAQKNSAMRRLAIHSNAEMYAWINSAQGARELNLPSVYGDAAEWNTAELRREMSHS.

An HTH luxR-type domain is found at 147–212; sequence FSYRSVILTL…EMYAWINSAQ (66 aa).

This is an uncharacterized protein from Escherichia coli O157:H7.